The primary structure comprises 381 residues: uncharacterized protein (381 aa).

This sequence belongs to the glycerate kinase type-1 family.

This is an uncharacterized protein from Mycobacterium tuberculosis (strain CDC 1551 / Oshkosh).